The sequence spans 330 residues: Free fatty acid receptor 2 (330 aa).

Residues 1-8 (MTPDWHSS) lie on the Extracellular side of the membrane. Residues 9–29 (LILTAYILIFLTGLPANLLAL) traverse the membrane as a helical segment. Residues 30–43 (RAFVSRVRQPQPAP) are Cytoplasmic-facing. A helical membrane pass occupies residues 44-64 (VHILLLNLTLADLLLLLLLPF). The Extracellular portion of the chain corresponds to 65–79 (RIVEAASNFRWYLPK). The chain crosses the membrane as a helical span at residues 80–100 (IVCALTGFGFYSSIYCSTWLL). Residues 101 to 126 (AGISIERYLGVAFPVQYKLSRRPLYG) are Cytoplasmic-facing. Residues 127-147 (VIAALVAWIMSFGHCTIVIIV) form a helical membrane-spanning segment. Over 148–184 (QYLNSTEQVGTENQITCYENFTQAQLDVVLPVRLELC) the chain is Extracellular. N151 and N167 each carry an N-linked (GlcNAc...) asparagine glycan. Residues 185-205 (LVLFFVPMTVTIFCYWRFVWI) traverse the membrane as a helical segment. Residues 206 to 219 (MLTQPHVGAQRRRR) are Cytoplasmic-facing. A helical transmembrane segment spans residues 220–240 (AVGLAVVTLLNFLVCFGPYNM). Topologically, residues 241-255 (SHLVGFHLRQSPSWR) are extracellular. A helical transmembrane segment spans residues 256–276 (VEAVVFSSLNASLDPLLFYFS). The Cytoplasmic segment spans residues 277 to 330 (SSVVRRAFGKGLLLLRNPGSSMLGRGAEETVEGTKTDRGGSQTEGAQSSDFVTE). Residues 300–330 (GRGAEETVEGTKTDRGGSQTEGAQSSDFVTE) are disordered. Over residues 302-314 (GAEETVEGTKTDR) the composition is skewed to basic and acidic residues. Residues 315 to 330 (GGSQTEGAQSSDFVTE) are compositionally biased toward polar residues.

Belongs to the G-protein coupled receptor 1 family. As to quaternary structure, interacts with FCN1 (via Fibrinogen C-terminal domain). In terms of tissue distribution, detected in whole wall and separated mucosa in the distal ileum and colon. Expressed by enteroendocrine cells expressing peptide YY (PYY) (at protein level).

The protein localises to the cell membrane. Its function is as follows. G protein-coupled receptor that is activated by a major product of dietary fiber digestion, the short chain fatty acids (SCFAs), and that plays a role in the regulation of whole-body energy homeostasis and in intestinal immunity. In omnivorous mammals, the short chain fatty acids acetate, propionate and butyrate are produced primarily by the gut microbiome that metabolizes dietary fibers. SCFAs serve as a source of energy but also act as signaling molecules. That G protein-coupled receptor is probably coupled to the pertussis toxin-sensitive, G(i/o)-alpha family of G proteins but also to the Gq family. Its activation results in the formation of inositol 1,4,5-trisphosphate, the mobilization of intracellular calcium, the phosphorylation of the MAPK3/ERK1 and MAPK1/ERK2 kinases and the inhibition of intracellular cAMP accumulation. May play a role in glucose homeostasis by regulating the secretion of GLP-1, in response to short-chain fatty acids accumulating in the intestine. May also regulate the production of LEP/Leptin, a hormone acting on the central nervous system to inhibit food intake. Finally, may also regulate whole-body energy homeostasis through adipogenesis regulating both differentiation and lipid storage of adipocytes. In parallel to its role in energy homeostasis, may also mediate the activation of the inflammatory and immune responses by SCFA in the intestine, regulating the rapid production of chemokines and cytokines. May also play a role in the resolution of the inflammatory response and control chemotaxis in neutrophils. In addition to SCFAs, may also be activated by the extracellular lectin FCN1 in a process leading to activation of monocytes and inducing the secretion of interleukin-8/IL-8 in response to the presence of microbes. The protein is Free fatty acid receptor 2 (Ffar2) of Rattus norvegicus (Rat).